We begin with the raw amino-acid sequence, 479 residues long: Glutamate--tRNA ligase (479 aa).

Positions 9–19 (PSPTGNLHIGT) match the 'HIGH' region motif. The 'KMSKS' region motif lies at 243-247 (KLSKR). K246 contacts ATP.

This sequence belongs to the class-I aminoacyl-tRNA synthetase family. Glutamate--tRNA ligase type 1 subfamily. As to quaternary structure, monomer.

The protein resides in the cytoplasm. The catalysed reaction is tRNA(Glu) + L-glutamate + ATP = L-glutamyl-tRNA(Glu) + AMP + diphosphate. Functionally, catalyzes the attachment of glutamate to tRNA(Glu) in a two-step reaction: glutamate is first activated by ATP to form Glu-AMP and then transferred to the acceptor end of tRNA(Glu). In Synechococcus sp. (strain JA-3-3Ab) (Cyanobacteria bacterium Yellowstone A-Prime), this protein is Glutamate--tRNA ligase.